Here is a 596-residue protein sequence, read N- to C-terminus: MHHSSSGSRCVLQNGLELTVILPRLHRFDIIDTFKTLTKELLRQEHLPKVLQKKEPHQLTDRTFFIDGSNQGLKTIPSEILALKELEEVHLENNQIAEIPQGIQQLQNTKVLYLHNNSLQDLCPELGALSSLESLDLSGNPLVISSLHVVSRLRTLRELRLYRTGLTEIPTGICKSLHHLELFGLSENFLESLPEEIVNQTKLREIYLKQNHFEVFPCDLCVLYNLEVIDLDENKLKSIPGDIGHLVRLQKFYVASNHLMSLPESLSQCSKLSVLDLTHNSIHSLPSSLELLTELTEVGLSGNRLEKVPRLLCSWVSLHLLYLRNTSLHGLRDSFKRLINLRFLDLSQNHIEHFPVQICALKNLEILALDDNKVRQLPPSISLLSNLKILGLTGNDLLSFPEEIFSLISLEKLYIGQDQGSKLSSLPENIKRLMNLKELYIENNRLEQLPASLGLMPNLEVLDCRHNLLKQLPDAICRTRNLRELLLEDNLLCCLPENLDHLVNLKVLTLMNNPMVDPPIYVCNQGNEAIWKHLKENRIRKMMATTIQAWWRGIMVRKGYGSYEELLKARKKGKSPPKDKKGKKAAKGKPEKGNKK.

LRR repeat units lie at residues 22–44, 59–83, 84–106, 108–129, 130–152, 153–176, 177–200, 202–223, 224–246, 248–269, 270–293, 295–315, 317–337, 338–361, 362–384, 385–407, 410–433, 434–457, 459–479, 480–502, 504–525, and 527–549; these read LPRL…LLRQ, LTDR…ILAL, KELE…IQQL, NTKV…LGAL, SSLE…VVSR, LRTL…ICKS, LHHL…IVNQ, KLRE…LCVL, YNLE…IGHL, RLQK…LSQC, SKLS…ELLT, LTEV…LCSW, SLHL…SFKR, LINL…ICAL, KNLE…ISLL, SNLK…IFSL, LEKL…IKRL, MNLK…GLMP, LEVL…ICRT, RNLR…LDHL, NLKV…VCNQ, and NEAI…TIQA. Residues 540-569 enclose the IQ domain; the sequence is RKMMATTIQAWWRGIMVRKGYGSYEELLKA. Basic residues predominate over residues 569–587; sequence ARKKGKSPPKDKKGKKAAK. The tract at residues 569 to 596 is disordered; it reads ARKKGKSPPKDKKGKKAAKGKPEKGNKK.

This Mus musculus (Mouse) protein is Leucine-rich repeat and IQ domain-containing protein 4 (Lrriq4).